The primary structure comprises 170 residues: Large ribosomal subunit protein uL18c (170 aa).

A chloroplast-targeting transit peptide spans 1 to 63 (MLASPALAGA…QADRIARHVR (63 aa)).

It belongs to the universal ribosomal protein uL18 family. In terms of assembly, part of the 50S ribosomal subunit; contacts the 5S rRNA.

The protein resides in the plastid. Its subcellular location is the chloroplast. Functionally, binds 5S rRNA, forms part of the central protuberance of the 50S subunit. In Oryza sativa subsp. japonica (Rice), this protein is Large ribosomal subunit protein uL18c (RPL18).